A 37-amino-acid polypeptide reads, in one-letter code: Cytochrome b6-f complex subunit 5 (37 aa).

Residues 5–25 traverse the membrane as a helical segment; that stretch reads LLSGIVLGMIPVTLAGLFVTA.

This sequence belongs to the PetG family. As to quaternary structure, the 4 large subunits of the cytochrome b6-f complex are cytochrome b6, subunit IV (17 kDa polypeptide, PetD), cytochrome f and the Rieske protein, while the 4 small subunits are PetG, PetL, PetM and PetN. The complex functions as a dimer.

The protein resides in the plastid. It localises to the chloroplast thylakoid membrane. Its function is as follows. Component of the cytochrome b6-f complex, which mediates electron transfer between photosystem II (PSII) and photosystem I (PSI), cyclic electron flow around PSI, and state transitions. PetG is required for either the stability or assembly of the cytochrome b6-f complex. The polypeptide is Cytochrome b6-f complex subunit 5 (Staurastrum punctulatum (Green alga)).